Reading from the N-terminus, the 380-residue chain is Probable polyglutamine synthesis accessory protein MT0602 (380 aa).

It belongs to the CapA family.

Functionally, could be involved in the biosynthesis, transport or localization of poly-alpha-L-glutamine (PLG), a cell wall component. Contributes to stress tolerance and virulence. The polypeptide is Probable polyglutamine synthesis accessory protein MT0602 (Mycobacterium tuberculosis (strain CDC 1551 / Oshkosh)).